The chain runs to 404 residues: Activity-regulated cytoskeleton-associated protein (404 aa).

Residues 51 to 78 (EVSKQVERELKGLQKSVGKLENNLEDHV) adopt a coiled-coil conformation. The segment at 351 to 404 (VQGNMDHSEEPSPQRTPEIQSGDSVESMPPSTTASPVPSNGTQPEPPSPPATVI) is disordered. The segment covering 363–393 (PQRTPEIQSGDSVESMPPSTTASPVPSNGTQ) has biased composition (polar residues). A compositionally biased stretch (pro residues) spans 394-404 (PEPPSPPATVI).

Belongs to the ARC/ARG3.1 family. In terms of assembly, homooligomer; homooligomerizes into virion-like capsids. Palmitoylation anchors the protein into the membrane by allowing direct insertion into the hydrophobic core of the lipid bilayer. As to expression, expressed at various levels throughout the brain.

The protein resides in the extracellular vesicle membrane. Its subcellular location is the postsynaptic cell membrane. The protein localises to the synapse. It localises to the postsynaptic density. It is found in the early endosome membrane. The protein resides in the cell projection. Its subcellular location is the dendrite. The protein localises to the cytoplasm. It localises to the cytoskeleton. It is found in the cell cortex. The protein resides in the dendritic spine. Its function is as follows. Master regulator of synaptic plasticity that self-assembles into virion-like capsids that encapsulate RNAs and mediate intercellular RNA transfer in the nervous system. ARC protein is released from neurons in extracellular vesicles that mediate the transfer of ARC mRNA into new target cells, where ARC mRNA can undergo activity-dependent translation. ARC capsids are endocytosed and are able to transfer ARC mRNA into the cytoplasm of neurons. Acts as a key regulator of synaptic plasticity: required for protein synthesis-dependent forms of long-term potentiation (LTP) and depression (LTD) and for the formation of long-term memory. Regulates synaptic plasticity by promoting endocytosis of AMPA receptors (AMPARs) in response to synaptic activity: this endocytic pathway maintains levels of surface AMPARs in response to chronic changes in neuronal activity through synaptic scaling, thereby contributing to neuronal homeostasis. Acts as a postsynaptic mediator of activity-dependent synapse elimination in the developing cerebellum by mediating elimination of surplus climbing fiber synapses. Accumulates at weaker synapses, probably to prevent their undesired enhancement. This suggests that ARC-containing virion-like capsids may be required to eliminate synaptic material. The chain is Activity-regulated cytoskeleton-associated protein from Gallus gallus (Chicken).